The following is a 21-amino-acid chain: EQQCTPGQTKKEDCNNCTSGD.

A Pacifastin domain is found at 1–21; it reads EQQCTPGQTKKEDCNNCTSGD. The disordered stretch occupies residues 1–21; it reads EQQCTPGQTKKEDCNNCTSGD.

The protein belongs to the protease inhibitor I19 family. Expressed in hemolymph.

It localises to the secreted. Functionally, probable serine protease inhibitor. This chain is Serine protease inhibitor 1, found in Melanoplus sanguinipes (Migratory grasshopper).